The primary structure comprises 986 residues: Vacuolar membrane protease (986 aa).

The Cytoplasmic portion of the chain corresponds to M1–R16. A helical transmembrane segment spans residues W17 to V37. At H38–T392 the chain is on the vacuolar side. The N-linked (GlcNAc...) asparagine glycan is linked to N121. Positions 176 and 188 each coordinate Zn(2+). The active-site Proton acceptor is the E222. Residues E223, E248, and H321 each coordinate Zn(2+). Residues L393–I413 traverse the membrane as a helical segment. At A414–G444 the chain is on the cytoplasmic side. Residues F445–L465 traverse the membrane as a helical segment. The Vacuolar portion of the chain corresponds to V466 to H475. The helical transmembrane segment at S476–V496 threads the bilayer. Residues S497 to R510 lie on the Cytoplasmic side of the membrane. The chain crosses the membrane as a helical span at residues I511–Y531. The Vacuolar portion of the chain corresponds to Q532–R535. Residues G536 to I556 form a helical membrane-spanning segment. Over S557–T668 the chain is Cytoplasmic. Polar residues predominate over residues Q573–G585. The disordered stretch occupies residues Q573–G622. Positions D596–P613 are enriched in acidic residues. The chain crosses the membrane as a helical span at residues L669–L689. The Vacuolar portion of the chain corresponds to T690–L704. Residues F705–I725 form a helical membrane-spanning segment. Residues H726–L732 lie on the Cytoplasmic side of the membrane. Residues P733–F753 form a helical membrane-spanning segment. The Vacuolar segment spans residues S754 to I986. N-linked (GlcNAc...) asparagine glycans are attached at residues N799, N840, and N948. A disordered region spans residues N840–I859.

The protein belongs to the peptidase M28 family. Zn(2+) serves as cofactor.

The protein resides in the vacuole membrane. Its function is as follows. May be involved in vacuolar sorting and osmoregulation. The protein is Vacuolar membrane protease of Aspergillus niger (strain ATCC MYA-4892 / CBS 513.88 / FGSC A1513).